A 227-amino-acid chain; its full sequence is Ribonuclease 3 (227 aa).

The region spanning L4–G126 is the RNase III domain. E39 lines the Mg(2+) pocket. D43 is a catalytic residue. Mg(2+) is bound by residues D112 and E115. Residue E115 is part of the active site. Residues D153–I226 form the DRBM domain.

It belongs to the ribonuclease III family. Homodimer. The cofactor is Mg(2+).

The protein localises to the cytoplasm. The catalysed reaction is Endonucleolytic cleavage to 5'-phosphomonoester.. Digests double-stranded RNA. Involved in the processing of primary rRNA transcript to yield the immediate precursors to the large and small rRNAs (23S and 16S). Processes some mRNAs, and tRNAs when they are encoded in the rRNA operon. Processes pre-crRNA and tracrRNA of type II CRISPR loci if present in the organism. This Haemophilus influenzae (strain 86-028NP) protein is Ribonuclease 3.